Consider the following 590-residue polypeptide: Putative histone-lysine N-methyltransferase PRDM6 (590 aa).

A disordered region spans residues 25–87 (QLFPHGGGGP…STPASSSTSA (63 aa)). A compositionally biased stretch (gly residues) spans 29–42 (HGGGGPLKGGGAAG). Over residues 71–87 (ASLSSASSTPASSSTSA) the composition is skewed to low complexity. The region spanning 241 to 360 (REVCLCTSTV…RGTELLVWYN (120 aa)) is the SET domain. The C2H2-type 1; degenerate zinc-finger motif lies at 468 to 490 (WKCGQCFKTFTQRILLQMHVCTQ). C2H2-type zinc fingers lie at residues 496–518 (YQCGHCSQSFSQPSELRNHVVTH) and 524–546 (FKCGYCGRAFAGATTLNNHIRTH). The C2H2-type 4; degenerate zinc finger occupies 552-574 (FKCERCERSFTQATQLSRHQRMP).

Belongs to the class V-like SAM-binding methyltransferase superfamily. Interacts with HDAC1, HDAC2, HDAC3, CBX1 and EP300.

It is found in the nucleus. It carries out the reaction L-lysyl(20)-[histone H4] + S-adenosyl-L-methionine = N(6)-methyl-L-lysyl(20)-[histone H4] + S-adenosyl-L-homocysteine + H(+). Functionally, putative histone methyltransferase that acts as a transcriptional repressor of smooth muscle gene expression. Promotes the transition from differentiated to proliferative smooth muscle by suppressing differentiation and maintaining the proliferative potential of vascular smooth muscle cells. Also plays a role in endothelial cells by inhibiting endothelial cell proliferation, survival and differentiation. It is unclear whether it has histone methyltransferase activity in vivo. According to some authors, it does not act as a histone methyltransferase by itself and represses transcription by recruiting EHMT2/G9a. According to others, it possesses histone methyltransferase activity when associated with other proteins and specifically methylates 'Lys-20' of histone H4 in vitro. 'Lys-20' methylation represents a specific tag for epigenetic transcriptional repression. The polypeptide is Putative histone-lysine N-methyltransferase PRDM6 (PRDM6) (Bos taurus (Bovine)).